We begin with the raw amino-acid sequence, 407 residues long: Putative ammonium transporter MTH_661 (407 aa).

12 helical membrane-spanning segments follow: residues 9–29 (AWML…VAMF), 47–67 (FVSL…LIFG), 70–90 (VSGI…GSAS), 101–121 (FAIF…GAVV), 129–149 (WILF…HWVW), 162–182 (FAGG…LALV), 196–216 (LGYS…FNAG), 226–246 (ANAM…WILM), 257–277 (LGAL…AGFV), 279–299 (IGAS…AVSW), 312–332 (VFGI…LFAV), and 357–377 (IGVV…AMLL).

Belongs to the ammonia transporter channel (TC 1.A.11.2) family.

It is found in the cell membrane. The protein is Putative ammonium transporter MTH_661 of Methanothermobacter thermautotrophicus (strain ATCC 29096 / DSM 1053 / JCM 10044 / NBRC 100330 / Delta H) (Methanobacterium thermoautotrophicum).